Reading from the N-terminus, the 61-residue chain is Small ribosomal subunit protein uS14 (61 aa).

4 residues coordinate Zn(2+): cysteine 24, cysteine 27, cysteine 40, and cysteine 43.

The protein belongs to the universal ribosomal protein uS14 family. Zinc-binding uS14 subfamily. In terms of assembly, part of the 30S ribosomal subunit. Contacts proteins S3 and S10. The cofactor is Zn(2+).

Its function is as follows. Binds 16S rRNA, required for the assembly of 30S particles and may also be responsible for determining the conformation of the 16S rRNA at the A site. The protein is Small ribosomal subunit protein uS14 of Dictyoglomus turgidum (strain DSM 6724 / Z-1310).